We begin with the raw amino-acid sequence, 216 residues long: Ras-like protein (216 aa).

Residue 16-23 (GGGGVGKS) participates in GTP binding. The Effector region signature appears at 38-46 (YDPTIEDSY). Residues 63–67 (DTAGQ) and 122–125 (NKCD) contribute to the GTP site. 2 S-palmitoyl cysteine lipidation sites follow: Cys209 and Cys210. The residue at position 213 (Cys213) is a Cysteine methyl ester. Residue Cys213 is the site of S-geranylgeranyl cysteine attachment. A propeptide spans 214–216 (VVL) (removed in mature form).

This sequence belongs to the small GTPase superfamily. Ras family.

It localises to the cell membrane. The catalysed reaction is GTP + H2O = GDP + phosphate + H(+). With respect to regulation, alternates between an inactive form bound to GDP and an active form bound to GTP. Activated by a guanine nucleotide-exchange factor (GEF) and inactivated by a GTPase-activating protein (GAP). The chain is Ras-like protein (RAS1) from Cryptococcus neoformans var. neoformans serotype D (strain B-3501A) (Filobasidiella neoformans).